The chain runs to 475 residues: 7-dehydrocholesterol reductase (475 aa).

A disordered region spans residues 1–21 (MAAKSQPSAPKTKSTSGLTNG). Serine 14 is subject to Phosphoserine. Transmembrane regions (helical) follow at residues 40-60 (LASVIFLLLFAPFIVYYFIMA), 151-173 (WLLTHLLWFANAHLLGWFSPTII), 178-200 (IPLLWCANILGYTVSTFAMVKGY), 266-286 (VTNSMVLVNILQAIYVLDFFW), 306-326 (LGWGDCVWLPYLYTLQGLYLV), and 331-351 (QLPTYYALGVLLLGLLGYYIF). Residues lysine 358, arginine 362, leucine 395, tryptophan 400, and 407–408 (NY) contribute to the NADP(+) site. A helical membrane pass occupies residues 420-440 (LACGGGHLLPYFYIIFMAILL). Residues aspartate 447, 451-455 (CANKY), and tyrosine 462 each bind NADP(+).

It belongs to the ERG4/ERG24 family. As to quaternary structure, interacts with DHCR24; this interaction regulates DHCR7 activity. Interacts with TMEM147.

The protein resides in the endoplasmic reticulum membrane. The catalysed reaction is cholesterol + NADP(+) = 7-dehydrocholesterol + NADPH + H(+). It catalyses the reaction 7-dehydrodesmosterol + NADPH + H(+) = desmosterol + NADP(+). It carries out the reaction 5,6alpha-epoxy-5alpha-cholestan-3beta-ol + H2O = 5alpha-cholestane-3beta,5,6beta-triol. The enzyme catalyses 5,6beta-epoxy-5beta-cholestan-3beta-ol + H2O = 5alpha-cholestane-3beta,5,6beta-triol. It functions in the pathway steroid biosynthesis; cholesterol biosynthesis. Oxidoreductase that catalyzes the last step of the cholesterol synthesis pathway, which transforms cholesta-5,7-dien-3beta-ol (7-dehydrocholesterol,7-DHC) into cholesterol by reducing the C7-C8 double bond of its sterol core. Can also metabolize cholesta-5,7,24-trien-3beta-ol (7-dehydrodemosterol, 7-DHD) to desmosterol, which is then metabolized by the Delta(24)-sterol reductase (DHCR24) to cholesterol. Modulates ferroptosis (a form of regulated cell death driven by iron-dependent lipid peroxidation) through the metabolic breakdown of the anti-ferroptotic metabolites 7-DHC and 7-DHD which, when accumulated, divert the propagation of peroxyl radical-mediated damage from phospholipid components to its sterol core, protecting plasma and mitochondrial membranes from phospholipid autoxidation. Functionally, component of the microsomal antiestrogen binding site (AEBS), a multiproteic complex at the ER membrane that consists of an association between cholestenol Delta-isomerase/EBP and DHCR7. This complex is responsible for cholesterol-5,6-epoxide hydrolase (ChEH) activity, which consists in the hydration of cholesterol-5,6-epoxides (5,6-EC) into cholestane-3beta,5alpha,6beta-triol (CT). The precise role of each component of this complex has not been described yet. The sequence is that of 7-dehydrocholesterol reductase (DHCR7) from Bos taurus (Bovine).